Reading from the N-terminus, the 214-residue chain is tRNA (guanine-N(7)-)-methyltransferase (214 aa).

Residues Glu-44, Glu-69, Asp-96, and Asp-118 each contribute to the S-adenosyl-L-methionine site. The active site involves Asp-118. Position 122 (Lys-122) interacts with substrate. The interval 124 to 129 (RHEKRR) is interaction with RNA. Residues Asp-154 and 192-195 (TEYE) each bind substrate.

Belongs to the class I-like SAM-binding methyltransferase superfamily. TrmB family.

It carries out the reaction guanosine(46) in tRNA + S-adenosyl-L-methionine = N(7)-methylguanosine(46) in tRNA + S-adenosyl-L-homocysteine. It functions in the pathway tRNA modification; N(7)-methylguanine-tRNA biosynthesis. Functionally, catalyzes the formation of N(7)-methylguanine at position 46 (m7G46) in tRNA. In Lacticaseibacillus casei (strain BL23) (Lactobacillus casei), this protein is tRNA (guanine-N(7)-)-methyltransferase.